We begin with the raw amino-acid sequence, 354 residues long: Coiled-coil domain-containing protein 86 (354 aa).

Residues 1–354 form a disordered region; that stretch reads MDTPLRRSRR…QPPQRPATKV (354 aa). A phosphoserine mark is found at Ser18 and Ser24. The span at 31 to 44 shows a compositional bias: basic and acidic residues; that stretch reads VLVEFESNPKETGE. Phosphoserine occurs at positions 47 and 53. Low complexity predominate over residues 49-58; that stretch reads PGLGSPSRQP. A Phosphothreonine modification is found at Thr60. Residues Ser61, Ser64, Ser75, Ser86, Ser105, Ser108, Ser123, and Ser183 each carry the phosphoserine modification. Positions 97 to 107 are enriched in polar residues; sequence FPQNQPESSPE. Residues 199 to 211 show a composition bias toward basic and acidic residues; that stretch reads PAREGPAPKKREG. Phosphoserine is present on residues Ser212 and Ser213. Residues 232-248 are compositionally biased toward basic residues; the sequence is GKPKSGRVWKDRSKKRF. 2 stretches are compositionally biased toward basic and acidic residues: residues 267 to 289 and 297 to 311; these read DRQE…ERRR and AENL…RKAE. Positions 274 to 317 form a coiled coil; the sequence is AKDFARHLEEEKERRRQEKKKRRAENLRRRLENERKAEIVQVIR. Residues 320-330 are compositionally biased toward basic residues; that stretch reads AKLKRAKKKQL. Residue Arg336 is modified to Citrulline.

Post-translationally, citrullinated by PADI4.

Its subcellular location is the nucleus. The protein resides in the chromosome. It is found in the nucleolus. Functionally, required for proper chromosome segregation during mitosis and error-free mitotic progression. This chain is Coiled-coil domain-containing protein 86, found in Bos taurus (Bovine).